The primary structure comprises 742 residues: Photosystem I P700 chlorophyll a apoprotein A2 (742 aa).

Helical transmembrane passes span 46–69 (LFST…FHIA), 135–158 (LFQA…LHLQ), 175–199 (LNHH…HVAI), 273–291 (IAHH…GHMY), 336–359 (LHFQ…QHMG), 375–401 (SALY…IFFV), 423–445 (ALIS…IYVH), and 525–543 (FLVH…LILI). Residues cysteine 567 and cysteine 576 each coordinate [4Fe-4S] cluster. The next 2 membrane-spanning stretches (helical) occupy residues 583–604 (AMYL…YWHW) and 651–673 (LSVW…MFLI). Divinyl chlorophyll a is bound by residues histidine 662, methionine 670, and tyrosine 678. Tryptophan 679 lines the phylloquinone pocket. The helical transmembrane segment at 715–735 (LVGLAHFTIGNILTFGAFVIA) threads the bilayer.

It belongs to the PsaA/PsaB family. The PsaA/B heterodimer binds the P700 divinyl chlorophyll special pair and subsequent electron acceptors. PSI consists of a core antenna complex that captures photons, and an electron transfer chain that converts photonic excitation into a charge separation. The cyanobacterial PSI reaction center is composed of one copy each of PsaA,B,C,D,E,F,I,J,K,L,M and X, and forms trimeric complexes. PSI electron transfer chain: 5 divinyl chlorophyll a, 1 divinyl chlorophyll a', 2 phylloquinones and 3 4Fe-4S clusters. PSI core antenna: 90 divinyl chlorophyll a, 22 carotenoids, 3 phospholipids and 1 galactolipid. P700 is a divinyl chlorophyll a/divinyl chlorophyll a' dimer, A0 is one or more divinyl chlorophyll a, A1 is one or both phylloquinones and FX is a shared 4Fe-4S iron-sulfur center. serves as cofactor.

It localises to the cellular thylakoid membrane. It carries out the reaction reduced [plastocyanin] + hnu + oxidized [2Fe-2S]-[ferredoxin] = oxidized [plastocyanin] + reduced [2Fe-2S]-[ferredoxin]. PsaA and PsaB bind P700, the primary electron donor of photosystem I (PSI), as well as the electron acceptors A0, A1 and FX. PSI is a plastocyanin/cytochrome c6-ferredoxin oxidoreductase, converting photonic excitation into a charge separation, which transfers an electron from the donor P700 chlorophyll pair to the spectroscopically characterized acceptors A0, A1, FX, FA and FB in turn. Oxidized P700 is reduced on the lumenal side of the thylakoid membrane by plastocyanin or cytochrome c6. In Prochlorococcus marinus (strain MIT 9515), this protein is Photosystem I P700 chlorophyll a apoprotein A2.